Consider the following 380-residue polypeptide: Protein arginine N-methyltransferase PRMT10 (380 aa).

One can recognise an SAM-dependent MTase PRMT-type domain in the interval 26–357 (EVDFANYFCT…KENHRLMDME (332 aa)). S-adenosyl-L-methionine is bound by residues glutamine 42, arginine 51, glycine 75, glutamate 97, and glutamate 126. Catalysis depends on residues glutamate 140 and glutamate 149. The tract at residues 187–227 (ENKMEDLEIAMHDWNLFVEDTESYYGVNMNVLTKAYRAEHE) is dimerization arm.

This sequence belongs to the class I-like SAM-binding methyltransferase superfamily. Protein arginine N-methyltransferase family. In terms of assembly, ring-like homodimer.

The enzyme catalyses L-arginyl-[protein] + 2 S-adenosyl-L-methionine = N(omega),N(omega)-dimethyl-L-arginyl-[protein] + 2 S-adenosyl-L-homocysteine + 2 H(+). Methylates (mono and asymmetric dimethylation) the guanidino nitrogens of arginyl residues in some proteins. The protein is Protein arginine N-methyltransferase PRMT10 (PRMT10) of Oryza sativa subsp. japonica (Rice).